The following is a 64-amino-acid chain: uncharacterized protein (64 aa).

This is an uncharacterized protein from Enterobacteria phage T4 (Bacteriophage T4).